The primary structure comprises 3034 residues: MAPSSPRVLPALVLLAAAALPALELGAAAWELRVPGGARAFALGPGWSYRLDTTRTPRELLDVSREGPAAGRRLGLGAGTLGCARLAGRLLPLQVRLVARGAPTAPSLVLRARAYGARCGVRLLRRSARGAELRSPAVRSVPGLGDALCFPAAGGGAASLTSVLEAITNFPACSCPPVAGTGCRRGPICLRPGGSAELRLVCALGRAAGAVWVELVIEATSGTPSESPSVSPSLLNLSQPRAGVVRRSRRGTGSSTSPQFPLPSYQVSVPENEPAGTAVIELRAHDPDEGDAGRLSYQMEALFDERSNGYFLIDAATGAVTTARSLDRETKDTHVLKVSAVDHGSPRRSAATYLTVTVSDTNDHSPVFEQSEYRERIRENLEVGYEVLTIRATDGDAPSNANMRYRLLEGAGGVFEIDARSGVVRTRAVVDREEAAEYQLLVEANDQGRNPGPLSASATVHIVVEDENDNYPQFSEKRYVVQVPEDVAVNTAVLRVQATDRDQGQNAAIHYSIVSGNLKGQFYLHSLSGSLDVINPLDFEAIREYTLRIKAQDGGRPPLINSSGLVSVQVLDVNDNAPIFVSSPFQAAVLENVPLGHSVLHIQAVDADAGENARLQYRLVDTASTIVGGSSVDSENPASAPDFPFQIHNSSGWITVCAELDREEVEHYSFGVEAVDHGSPAMSSSASVSITVLDVNDNDPMFTQPVYELRLNEDAAVGSSVLTLRARDRDANSVITYQLTGGNTRNRFALSSQSGGGLITLALPLDYKQERQYVLAVTASDGTRSHTAQVFINVTDANTHRPVFQSSHYTVSVSEDRPVGTSIATISATDEDTGENARITYVLEDPVPQFRIDPDTGTIYTMTELDYEDQAAYTLAITAQDNGIPQKSDTTSLEILILDANDNAPRFLRDFYQGSVFEDAPPSTSVLQVSATDRDSGPNGRLLYTFQGGDDGDGDFYIEPTSGVIRTQRRLDRENVAVYNLWALAVDRGSPNPLSASVGIQVSVLDINDNPPVFEKDELELFVEENSPVGSVVARIRANDPDEGPNAQIMYQIVEGNVPEVFQLDLLSGDLRALVELDFEVRRDYMLVVQATSAPLVSRATVHIRLLDQNDNPPELPDFQILFNNYVTNKSNSFPSGVIGRIPAHDPDLSDSLNYTFLQGNELSLLLLDPATGELQLSRDLDNNRPLEALMEVSVSDGIHSVTALCTLRVTIITDDMLTNSITVRLENMSQEKFLSPLLSLFVEGVATVLSTTKDDIFVFNIQNDTDVSSNILNVTFSALLPGGTRGRFFPSEDLQEQIYLNRTLLTTISAQRVLPFDDNICLREPCENYMKCVSVLRFDSSAPFISSTTVLFRPIHPITGLRCRCPPGFTGDYCETEIDLCYSNPCGANGRCRSREGGYTCECFEDFTGEHCQVNVRSGRCASGVCKNGGTCVNLLIGGFHCVCPPGEYEHPYCEVSTRSFPPQSFVTFRGLRQRFHFTVSLAFATQDRNALLLYNGRFNEKHDFIALEIVEEQLQLTFSAGETTTTVTPQVPGGVSDGRWHSVLVQYYNKPNIGHLGLPHGPSGEKVAVVTVDDCDAAVAVHFGSYVGNYSCAAQGTQSGSKKSLDLTGPLLLGGVPNLPEDFPVHSRQFVGCMRNLSIDGRIVDMAAFIANNGTRAGCASQRNFCDGTSCQNGGTCVNRWNTYLCECPLRFGGKNCEQAMPHPQRFTGESVVLWSDLDITISVPWYLGLMFRTRKEDGVLMEATAGTSSRLHLQILNSYIRFEVSYGPSDVASMQLSKSRITDGGWHHLLIELRSAKEGKDIKYLAVMTLDYGMDQSTVQIGNQLPGLKMRTIVIGGVTEDKVSVRHGFRGCMQGVRMGETSTNIATLNMNDALKVRVKDGCDVEDPCASSPCPPHSHCRDTWDSYSCICDRGYFGKKCVDACLLNPCKHVAACVRSPNTPRGYSCECGPGHYGQYCENKVDLPCPKGWWGNPVCGPCHCAVSQGFDPDCNKTNGQCQCKENYYKPPAQDACLPCDCFPHGSHSRACDMDTGQCACKPGVIGRQCNRCDNPFAEVTSLGCEVIYNGCPRAFEAGIWWPQTKFGQPAAVPCPKGSVGNAVRHCSGEKGWLPPELFNCTSGSFVDLKALNEKLNRNETRMDGNRSLRLAKALRNATQGNSTLFGNDVRTAYQLLARILQHESRQQGFDLAATREANFHEDVVHTGSALLAPATEASWEQIQRSEAGAAQLLRHFEAYFSNVARNVKRTYLRPFVIVTANMILAVDIFDKLNFTGAQVPRFEDIQEELPRELESSVSFPADTFKPPEKKEGPVVRLTNRRTTPLTAQPEPRAERETSSSRRRRHPDEPGQFAVALVVIYRTLGQLLPEHYDPDHRSLRLPNRPVINTPVVSAMVYSEGTPLPSSLQRPILVEFSLLETEERSKPVCVFWNHSLDTGGTGGWSAKGCELLSRNRTHVTCQCSHSASCAVLMDISRREHGEVLPLKIITYAALSLSLVALLVAFVLLSLVRTLRSNLHSIHKNLITALFFSQLIFMVGINQTENPFLCTVVAILLHYVSMGTFAWTLVENLHVYRMLTEVRNIDTGPMRFYHVVGWGIPAIVTGLAVGLDPQGYGNPDFCWLSLQDTLIWSFAGPVGTVIIINTVIFVLSAKVSCQRKHHYYERKGVVSMLRTAFLLLLLVTATWLLGLLAVNSDTLSFHYLFAAFSCLQGIFVLLFHCVAHREVRKHLRAVLAGKKLQLDDSATTRATLLTRSLNCNNTYSEGPDMLRTALGESTASLDSTTRDEGVQKLSVSSGPARGNHGEPDASFIPRNSKKAHGPDSDSDSELSLDEHSSSYASSHTSDSEDDGGEAEDKWNPAGGPAHSTPKADALANHVPAGWPDESLAGSDSEELDTEPHLKVETKVSVELHRQAQGNHCGDRPSDPESGVLAKPVAVLSSQPQEQRKGILKNKVTYPPPLPEQPLKSRLREKLADCEQSPTSSRTSSLGSGDGVHATDCVITIKTPRREPGREHLNGVAMNVRTGSAQANGSDSEKP.

A signal peptide spans M1 to A29. At W30–K2484 the chain is on the extracellular side. Residues G222–G243 are compositionally biased toward low complexity. Positions G222–V267 are disordered. Residue N236 is glycosylated (N-linked (GlcNAc...) asparagine). Cadherin domains are found at residues P261–F368, E369–F474, S475–F580, V581–F702, T703–F804, Q805–F907, L908–F1014, E1015–L1116, and I1121–L1239. 3 N-linked (GlcNAc...) asparagine glycosylation sites follow: N561, N649, and N793. N-linked (GlcNAc...) asparagine glycosylation is found at N1129, N1154, N1228, N1264, N1274, and N1302. Residues D1318–E1376 enclose the EGF-like 1; calcium-binding domain. Cystine bridges form between C1322-C1333, C1327-C1364, C1366-C1375, C1382-C1393, C1387-C1402, C1404-C1413, C1422-C1433, C1427-C1443, and C1445-C1455. Positions E1378–Q1414 constitute an EGF-like 2; calcium-binding domain. The 39-residue stretch at R1418 to E1456 folds into the EGF-like 3; calcium-binding domain. A Laminin G-like 1 domain is found at V1457–C1661. 3 N-linked (GlcNAc...) asparagine glycosylation sites follow: N1591, N1638, and N1655. Cystine bridges form between C1635-C1661, C1668-C1679, C1673-C1688, C1690-C1699, C1855-C1885, C1891-C1902, C1896-C1911, C1913-C1922, C1926-C1937, C1931-C1949, C1951-C1960, C1968-C1981, and C1983-C1993. Residues Q1664–E1700 enclose the EGF-like 4; calcium-binding domain. A (3R)-3-hydroxyasparagine modification is found at N1681. The region spanning P1704–C1885 is the Laminin G-like 2 domain. The 36-residue stretch at V1887 to C1922 folds into the EGF-like 5; calcium-binding domain. Residue D1904 is modified to (3R)-3-hydroxyaspartate. The EGF-like 6; calcium-binding domain occupies V1923–E1961. The EGF-like 7; calcium-binding domain occupies N1962–N1994. N-linked (GlcNAc...) asparagine glycosylation occurs at N1994. An EGF-like 8; calcium-binding domain is found at T1996–D2031. Intrachain disulfides connect C2000–C2015, C2002–C2018, C2020–C2030, C2039–C2048, and C2051–C2063. The region spanning C2018 to V2065 is the Laminin EGF-like domain. N-linked (GlcNAc...) asparagine glycans are attached at residues N2118, N2137, N2144, N2155, N2160, and N2272. A disordered region spans residues S2295 to D2346. Residues P2312–E2476 form the GAIN-B domain. Cystine bridges form between C2426–C2458 and C2446–C2460. The interval C2426–E2476 is GPS. N2430 and N2452 each carry an N-linked (GlcNAc...) asparagine glycan. Residues I2485 to L2505 traverse the membrane as a helical segment. The Cytoplasmic segment spans residues S2506 to H2516. Residues S2517–I2537 traverse the membrane as a helical segment. N2538 carries an N-linked (GlcNAc...) asparagine glycan. The Extracellular segment spans residues N2538–N2542. The helical transmembrane segment at P2543 to W2563 threads the bilayer. The Cytoplasmic segment spans residues T2564–R2587. A helical membrane pass occupies residues F2588–D2608. Over P2609–T2625 the chain is Extracellular. The chain crosses the membrane as a helical span at residues L2626–V2646. Residues L2647 to R2670 are Cytoplasmic-facing. Residues T2671 to N2691 traverse the membrane as a helical segment. Topologically, residues S2692–T2694 are extracellular. A helical transmembrane segment spans residues L2695 to F2715. Over H2716–P3034 the chain is Cytoplasmic. The segment at T2774–P3034 is disordered. S2776, S2779, S2886, and S2888 each carry phosphoserine. Residues T2893–R2909 show a composition bias toward basic and acidic residues. The span at S2976–G2986 shows a compositional bias: low complexity. A compositionally biased stretch (basic and acidic residues) spans P3003–L3012. Residues R3020 to P3034 show a composition bias toward polar residues.

The protein belongs to the G-protein coupled receptor 2 family. LN-TM7 subfamily. The iron and 2-oxoglutarate dependent 3-hydroxylation of aspartate and asparagine is (R) stereospecific within EGF domains. As to expression, expressed in the brain, where it is localized principally in the ependymal cell layer, choroid plexus and the area postrema. Also found in spinal cord and in the eye.

The protein localises to the cell membrane. Receptor that may have an important role in cell/cell signaling during nervous system formation. The protein is Cadherin EGF LAG seven-pass G-type receptor 1 (Celsr1) of Mus musculus (Mouse).